Reading from the N-terminus, the 212-residue chain is Maleylacetoacetate isomerase (212 aa).

One can recognise a GST N-terminal domain in the interval 1 to 83 (MKLYTYYRST…YLEERYPQPA (83 aa)). A GST C-terminal domain is found at 88–211 (DPLRRARERG…HPANQPDTPA (124 aa)).

It belongs to the GST superfamily. Zeta family.

The catalysed reaction is 4-maleylacetoacetate = 4-fumarylacetoacetate. Its pathway is amino-acid degradation; L-phenylalanine degradation; acetoacetate and fumarate from L-phenylalanine: step 5/6. The polypeptide is Maleylacetoacetate isomerase (maiA) (Pseudomonas aeruginosa (strain ATCC 15692 / DSM 22644 / CIP 104116 / JCM 14847 / LMG 12228 / 1C / PRS 101 / PAO1)).